A 453-amino-acid chain; its full sequence is Allantoinase (453 aa).

6 residues coordinate Zn(2+): His-59, His-61, Lys-146, His-186, His-242, and Asp-315. An N6-carboxylysine modification is found at Lys-146.

This sequence belongs to the metallo-dependent hydrolases superfamily. Allantoinase family. As to quaternary structure, homotetramer. Zn(2+) serves as cofactor. In terms of processing, carboxylation allows a single lysine to coordinate two zinc ions.

It catalyses the reaction (S)-allantoin + H2O = allantoate + H(+). The protein operates within nitrogen metabolism; (S)-allantoin degradation; allantoate from (S)-allantoin: step 1/1. Its function is as follows. Catalyzes the conversion of allantoin (5-ureidohydantoin) to allantoic acid by hydrolytic cleavage of the five-member hydantoin ring. The protein is Allantoinase of Escherichia coli O9:H4 (strain HS).